A 288-amino-acid chain; its full sequence is MEIFKTAFLMVALMLVFIAVGGYVGGEQGMMIAFLMAAGMNIFSYFFSDKLVLKRYNAIPVDENNAHGLYEIVSRLTQKANLPMPKIYIIPEEVPNAFATGRNPSHAAVAVTEGLLKILNENEIEGVLAHELSHVRHYDILTGSVAAILAGAIAMVANFAKIGTLAGQNQNSQRNANPVIMLIIAVVMPLAATVIQMAISREREYKADKGAAYLTGHPEWLASALTKLENYSNSYVMQNASEQSAHMFIVNPFGSLTSKLSVLFRTHPSTSDRIAELQRLEQEIKRGM.

Transmembrane regions (helical) follow at residues 6–26 and 28–48; these read TAFLMVALMLVFIAVGGYVGG and QGMMIAFLMAAGMNIFSYFFS. His130 is a binding site for Zn(2+). Glu131 is an active-site residue. His134 is a Zn(2+) binding site. The next 2 membrane-spanning stretches (helical) occupy residues 140–160 and 179–199; these read ILTGSVAAILAGAIAMVANFA and VIMLIIAVVMPLAATVIQMAI. Zn(2+) is bound at residue Glu204.

The protein belongs to the peptidase M48B family. The cofactor is Zn(2+).

The protein localises to the cell inner membrane. This is Protease HtpX homolog from Campylobacter concisus (strain 13826).